The chain runs to 93 residues: MPKPDIHPNWYPDAKVICNGEVVMTTGSTQPELHVDVWSGNHPFFTGTQKILDTEGRVDRFMRKYGMGSADAAADEKKPDAKNNNKDNTSKED.

A disordered region spans residues G68–D93. Positions A74–D93 are enriched in basic and acidic residues.

This sequence belongs to the bacterial ribosomal protein bL31 family. Type A subfamily. In terms of assembly, part of the 50S ribosomal subunit.

In terms of biological role, binds the 23S rRNA. The polypeptide is Large ribosomal subunit protein bL31 (Prochlorococcus marinus (strain MIT 9313)).